Reading from the N-terminus, the 337-residue chain is tRNA N6-adenosine threonylcarbamoyltransferase (337 aa).

Residues histidine 111 and histidine 115 each contribute to the Fe cation site. Substrate is bound by residues leucine 134–glycine 138, aspartate 167, glycine 180, and asparagine 272. A Fe cation-binding site is contributed by aspartate 300.

The protein belongs to the KAE1 / TsaD family. Fe(2+) is required as a cofactor.

It is found in the cytoplasm. It catalyses the reaction L-threonylcarbamoyladenylate + adenosine(37) in tRNA = N(6)-L-threonylcarbamoyladenosine(37) in tRNA + AMP + H(+). Required for the formation of a threonylcarbamoyl group on adenosine at position 37 (t(6)A37) in tRNAs that read codons beginning with adenine. Is involved in the transfer of the threonylcarbamoyl moiety of threonylcarbamoyl-AMP (TC-AMP) to the N6 group of A37, together with TsaE and TsaB. TsaD likely plays a direct catalytic role in this reaction. The protein is tRNA N6-adenosine threonylcarbamoyltransferase of Shewanella loihica (strain ATCC BAA-1088 / PV-4).